The chain runs to 344 residues: GDSL esterase/lipase At5g03590 (344 aa).

Positions 1-19 (MHYLMKLFFSLSLFFGING) are cleaved as a signal peptide. Ser-41 functions as the Nucleophile in the catalytic mechanism. N-linked (GlcNAc...) asparagine glycans are attached at residues Asn-126, Asn-227, and Asn-238. Residue Asp-318 is part of the active site.

This sequence belongs to the 'GDSL' lipolytic enzyme family.

It is found in the secreted. This Arabidopsis thaliana (Mouse-ear cress) protein is GDSL esterase/lipase At5g03590.